Reading from the N-terminus, the 520-residue chain is Cytochrome P450 4F2 (520 aa).

A propeptide spanning residues 1 to 4 (MSQL) is cleaved from the precursor. The heme site is built by E328 and C468.

This sequence belongs to the cytochrome P450 family. Heme serves as cofactor. As to expression, liver. Also present in kidney: specifically expressed in the S2 and S3 segments of proximal tubules in cortex and outer medulla.

The protein localises to the microsome membrane. It localises to the endoplasmic reticulum membrane. The catalysed reaction is an organic molecule + reduced [NADPH--hemoprotein reductase] + O2 = an alcohol + oxidized [NADPH--hemoprotein reductase] + H2O + H(+). The enzyme catalyses (5Z,8Z,11Z,14Z)-eicosatetraenoate + reduced [NADPH--hemoprotein reductase] + O2 = 20-hydroxy-(5Z,8Z,11Z,14Z)-eicosatetraenoate + oxidized [NADPH--hemoprotein reductase] + H2O + H(+). It carries out the reaction (5Z,8Z,11Z)-eicosatrienoate + reduced [NADPH--hemoprotein reductase] + O2 = 20-hydroxy-(5Z,8Z,11Z)-eicosatrienoate + oxidized [NADPH--hemoprotein reductase] + H2O + H(+). It catalyses the reaction (5Z,8Z,11Z,14Z,17Z)-eicosapentaenoate + reduced [NADPH--hemoprotein reductase] + O2 = 20-hydroxy-(5Z,8Z,11Z,14Z,17Z)-eicosapentaenoate + oxidized [NADPH--hemoprotein reductase] + H2O + H(+). The catalysed reaction is (4Z,7Z,10Z,13Z,16Z,19Z)-docosahexaenoate + reduced [NADPH--hemoprotein reductase] + O2 = 22-hydroxy-(4Z,7Z,10Z,13Z,16Z,19Z)-docosahexaenoate + oxidized [NADPH--hemoprotein reductase] + H2O + H(+). The enzyme catalyses 8,9-epoxy-(5Z,11Z,14Z)-eicosatrienoate + reduced [NADPH--hemoprotein reductase] + O2 = 20-hydroxy-8,9-epoxy-(5Z,11Z,14Z)-eicosatrienoate + oxidized [NADPH--hemoprotein reductase] + H2O + H(+). It carries out the reaction (9S,10R)-epoxy-octadecanoate + reduced [NADPH--hemoprotein reductase] + O2 = 18-hydroxy-(9S,10R)-epoxy-octadecanoate + oxidized [NADPH--hemoprotein reductase] + H2O + H(+). It catalyses the reaction (9R,10S)-epoxy-octadecanoate + reduced [NADPH--hemoprotein reductase] + O2 = 18-hydroxy-(9R,10S)-epoxy-octadecanoate + oxidized [NADPH--hemoprotein reductase] + H2O + H(+). The catalysed reaction is 12,13-epoxy-(9Z)-octadecenoate + reduced [NADPH--hemoprotein reductase] + O2 = 18-hydroxy-12,13-epoxy-(9Z)-octadecenoate + oxidized [NADPH--hemoprotein reductase] + H2O + H(+). The enzyme catalyses 9,10-epoxy-(12Z)-octadecenoate + reduced [NADPH--hemoprotein reductase] + O2 = 18-hydroxy-9,10-epoxy-(12Z)-octadecenoate + oxidized [NADPH--hemoprotein reductase] + H2O + H(+). It carries out the reaction 8-hydroxy-(5Z,9E,11Z,14Z)-eicosatetraenoate + reduced [NADPH--hemoprotein reductase] + O2 = 8,20-dihydroxy-(5Z,9E,11Z,14Z)-eicosatetraenoate + oxidized [NADPH--hemoprotein reductase] + H2O + H(+). It catalyses the reaction 12-hydroxy-(5Z,8Z,10E,14Z)-eicosatetraenoate + reduced [NADPH--hemoprotein reductase] + O2 = 12,20-dihydroxy-(5Z,8Z,10E,14Z)-eicosatetraenoate + oxidized [NADPH--hemoprotein reductase] + H2O + H(+). The catalysed reaction is 12-hydroxyoctadecanoate + reduced [NADPH--hemoprotein reductase] + O2 = 12,18-dihydroxyoctadecanoate + oxidized [NADPH--hemoprotein reductase] + H2O + H(+). The enzyme catalyses docosanoate + reduced [NADPH--hemoprotein reductase] + O2 = 22-hydroxydocosanoate + oxidized [NADPH--hemoprotein reductase] + H2O + H(+). It carries out the reaction 22-hydroxydocosanoate + reduced [NADPH--hemoprotein reductase] + O2 = 22-oxodocosanoate + oxidized [NADPH--hemoprotein reductase] + 2 H2O + H(+). It catalyses the reaction 22-oxodocosanoate + reduced [NADPH--hemoprotein reductase] + O2 = docosanedioate + oxidized [NADPH--hemoprotein reductase] + H2O + 2 H(+). The catalysed reaction is tetracosanoate + reduced [NADPH--hemoprotein reductase] + O2 = 24-hydroxytetracosanoate + oxidized [NADPH--hemoprotein reductase] + H2O + H(+). The enzyme catalyses hexacosanoate + reduced [NADPH--hemoprotein reductase] + O2 = 26-hydroxyhexacosanoate + oxidized [NADPH--hemoprotein reductase] + H2O + H(+). It carries out the reaction 26-hydroxyhexacosanoate + reduced [NADPH--hemoprotein reductase] + O2 = 26-oxohexacosanoate + oxidized [NADPH--hemoprotein reductase] + 2 H2O + H(+). It catalyses the reaction 26-oxohexacosanoate + reduced [NADPH--hemoprotein reductase] + O2 = hexacosanedioate + oxidized [NADPH--hemoprotein reductase] + H2O + 2 H(+). The catalysed reaction is 3-hydroxyoctadecanoate + reduced [NADPH--hemoprotein reductase] + O2 = 3,18-dihydroxyoctadecanoate + oxidized [NADPH--hemoprotein reductase] + H2O + H(+). The enzyme catalyses 3-hydroxyhexadecanoate + reduced [NADPH--hemoprotein reductase] + O2 = 3,16-dihydroxyhexadecanoate + oxidized [NADPH--hemoprotein reductase] + H2O + H(+). It carries out the reaction leukotriene B4 + reduced [NADPH--hemoprotein reductase] + O2 = 20-hydroxy-leukotriene B4 + oxidized [NADPH--hemoprotein reductase] + H2O + H(+). It catalyses the reaction 6-trans-leukotriene B4 + reduced [NADPH--hemoprotein reductase] + O2 = 20-hydroxy-6-trans-leukotriene B4 + oxidized [NADPH--hemoprotein reductase] + H2O + H(+). The catalysed reaction is lipoxin A4 + reduced [NADPH--hemoprotein reductase] + O2 = 20-hydroxy-lipoxin A4 + oxidized [NADPH--hemoprotein reductase] + H2O + H(+). The enzyme catalyses menaquinone-4 + reduced [NADPH--hemoprotein reductase] + O2 = omega-hydroxymenaquinone-4 + oxidized [NADPH--hemoprotein reductase] + H2O + H(+). It carries out the reaction phylloquinone + reduced [NADPH--hemoprotein reductase] + O2 = omega-hydroxyphylloquinone + oxidized [NADPH--hemoprotein reductase] + H2O + H(+). It catalyses the reaction (+)-alpha-tocopherol + reduced [NADPH--hemoprotein reductase] + O2 = 13-hydroxy-alpha-tocopherol + oxidized [NADPH--hemoprotein reductase] + H2O + H(+). The catalysed reaction is gamma-tocopherol + NADPH + O2 + H(+) = 13-hydroxy-gamma-tocopherol + NADP(+) + H2O. Its pathway is lipid metabolism; arachidonate metabolism. The protein operates within lipid metabolism; leukotriene B4 degradation. It functions in the pathway cofactor degradation; phylloquinone degradation. Its activity is regulated as follows. Inhibited by dietary sesamin. A cytochrome P450 monooxygenase involved in the metabolism of various endogenous substrates, including fatty acids, eicosanoids and vitamins. Mechanistically, uses molecular oxygen inserting one oxygen atom into a substrate, and reducing the second into a water molecule, with two electrons provided by NADPH via cytochrome P450 reductase (CPR; NADPH-ferrihemoprotein reductase). Catalyzes predominantly the oxidation of the terminal carbon (omega-oxidation) of long- and very long-chain fatty acids. Displays high omega-hydroxylase activity toward polyunsaturated fatty acids (PUFAs). Participates in the conversion of arachidonic acid to omega-hydroxyeicosatetraenoic acid (20-HETE), a signaling molecule acting both as vasoconstrictive and natriuretic with overall effect on arterial blood pressure. Plays a role in the oxidative inactivation of eicosanoids, including both pro-inflammatory and anti-inflammatory mediators such as leukotriene B4 (LTB4), lipoxin A4 (LXA4), and several HETEs. Catalyzes omega-hydroxylation of 3-hydroxy fatty acids. Converts monoepoxides of linoleic acid leukotoxin and isoleukotoxin to omega-hydroxylated metabolites. Contributes to the degradation of very long-chain fatty acids (VLCFAs) by catalyzing successive omega-oxidations and chain shortening. Plays an important role in vitamin metabolism by chain shortening. Catalyzes omega-hydroxylation of the phytyl chain of tocopherols (forms of vitamin E), with preference for gamma-tocopherols over alpha-tocopherols, thus promoting retention of alpha-tocopherols in tissues. Omega-hydroxylates and inactivates phylloquinone (vitamin K1), and menaquinone-4 (MK-4, a form of vitamin K2), both acting as cofactors in blood coagulation. This chain is Cytochrome P450 4F2, found in Homo sapiens (Human).